Reading from the N-terminus, the 268-residue chain is Tryptophan synthase alpha chain (268 aa).

Catalysis depends on proton acceptor residues E49 and D60.

This sequence belongs to the TrpA family. In terms of assembly, tetramer of two alpha and two beta chains.

The catalysed reaction is (1S,2R)-1-C-(indol-3-yl)glycerol 3-phosphate + L-serine = D-glyceraldehyde 3-phosphate + L-tryptophan + H2O. It functions in the pathway amino-acid biosynthesis; L-tryptophan biosynthesis; L-tryptophan from chorismate: step 5/5. In terms of biological role, the alpha subunit is responsible for the aldol cleavage of indoleglycerol phosphate to indole and glyceraldehyde 3-phosphate. This is Tryptophan synthase alpha chain from Vibrio vulnificus (strain CMCP6).